The sequence spans 355 residues: tRNA (guanine-N(1)-)-methyltransferase (355 aa).

S-adenosyl-L-methionine contacts are provided by residues glycine 109 and 129-134 (IGDYVL).

It belongs to the RNA methyltransferase TrmD family. Homodimer.

The protein resides in the cytoplasm. It carries out the reaction guanosine(37) in tRNA + S-adenosyl-L-methionine = N(1)-methylguanosine(37) in tRNA + S-adenosyl-L-homocysteine + H(+). Its function is as follows. Specifically methylates guanosine-37 in various tRNAs. In Chlamydia caviae (strain ATCC VR-813 / DSM 19441 / 03DC25 / GPIC) (Chlamydophila caviae), this protein is tRNA (guanine-N(1)-)-methyltransferase.